Consider the following 550-residue polypeptide: MAPDFPWLTAIIALPALSTLLIPLLPDKEGKTVRWYALIVGLVDFALMCFAFWQHFDPQATEFQLAESYRWLPSLGIQWSVAVDGISAPLVLLAGFVTTLAMFSAWQVNQRPRLFYALMLLLYSAQIGVFVAKDLFLFFLMWEIELIPVYLLVCIWGGKRRRYAAMKFLLYTAAASIFILVAALALSLNLPGGPNFDLGAIAQQDYPLGLQMWLYAGLLVSFGVKLAIFPLHTWLPDAHGEASSPVSMLLAGVLLKMGGYGLMRFNMELLPDAHVRFAPLLVILGVVNIVYGAFSSFGQTNMKRRLAYSSVSHMGFVLIGIASFTDLGINGAMLQMLSHGLIASVLFFLAGVTYDRTKTMVLAEVGGLGQVMPKVFAMFTVGALASLALPGMSGFVGELSVFVGLASSDTYSATFRTITVFLAAVGVILTPIYLLSMLREMFYTREMDLSCDLGQPTNVAIAGNAPVCFGNDCVLPSNAIYEDARPREIFIATCFTVLIIGVGLYPKLLMQMYDAKTQTLNTSVRQAQAIAKQPSEPIAALQAPELTMPH.

14 consecutive transmembrane segments (helical) span residues 5 to 25, 36 to 56, 86 to 106, 114 to 134, 135 to 155, 168 to 188, 212 to 232, 243 to 263, 277 to 297, 311 to 331, 332 to 352, 375 to 395, 418 to 438, and 489 to 509; these read FPWL…IPLL, YALI…WQHF, ISAP…FSAW, LFYA…VAKD, LFLF…LVCI, FLLY…ALSL, MWLY…FPLH, SSPV…YGLM, FAPL…FSSF, VSHM…GING, AMLQ…LAGV, VFAM…MSGF, ITVF…LSML, and IFIA…PKLL.

Belongs to the complex I subunit 4 family.

It localises to the cellular thylakoid membrane. It catalyses the reaction a plastoquinone + NADH + (n+1) H(+)(in) = a plastoquinol + NAD(+) + n H(+)(out). The enzyme catalyses a plastoquinone + NADPH + (n+1) H(+)(in) = a plastoquinol + NADP(+) + n H(+)(out). In terms of biological role, NDH-1 shuttles electrons from NAD(P)H, via FMN and iron-sulfur (Fe-S) centers, to quinones in the respiratory chain. The immediate electron acceptor for the enzyme in this species is believed to be plastoquinone. Couples the redox reaction to proton translocation (for every two electrons transferred, four hydrogen ions are translocated across the cytoplasmic membrane), and thus conserves the redox energy in a proton gradient. This Picosynechococcus sp. (strain ATCC 27264 / PCC 7002 / PR-6) (Agmenellum quadruplicatum) protein is NAD(P)H-quinone oxidoreductase chain 4 3.